The following is a 430-amino-acid chain: Adenylosuccinate synthetase (430 aa).

Residues 12–18 (GDEGKGK) and 40–42 (GHT) each bind GTP. Asp-13 serves as the catalytic Proton acceptor. Residues Asp-13 and Gly-40 each contribute to the Mg(2+) site. IMP contacts are provided by residues 13–16 (DEGK), 38–41 (NAGH), Thr-128, Arg-142, Gln-223, Thr-238, and Arg-302. His-41 serves as the catalytic Proton donor. A substrate-binding site is contributed by 298 to 304 (TTTGRPR). Residues Arg-304, 330 to 332 (SID), and 412 to 414 (SVG) each bind GTP.

The protein belongs to the adenylosuccinate synthetase family. Homodimer. The cofactor is Mg(2+).

It is found in the cytoplasm. The enzyme catalyses IMP + L-aspartate + GTP = N(6)-(1,2-dicarboxyethyl)-AMP + GDP + phosphate + 2 H(+). It participates in purine metabolism; AMP biosynthesis via de novo pathway; AMP from IMP: step 1/2. In terms of biological role, plays an important role in the de novo pathway of purine nucleotide biosynthesis. Catalyzes the first committed step in the biosynthesis of AMP from IMP. This Streptococcus suis (strain 98HAH33) protein is Adenylosuccinate synthetase.